The primary structure comprises 227 residues: NAD(P)H-quinone oxidoreductase subunit K, chloroplastic (227 aa).

4 residues coordinate [4Fe-4S] cluster: cysteine 43, cysteine 44, cysteine 108, and cysteine 139.

Belongs to the complex I 20 kDa subunit family. NDH is composed of at least 16 different subunits, 5 of which are encoded in the nucleus. [4Fe-4S] cluster is required as a cofactor.

It localises to the plastid. Its subcellular location is the chloroplast thylakoid membrane. The catalysed reaction is a plastoquinone + NADH + (n+1) H(+)(in) = a plastoquinol + NAD(+) + n H(+)(out). The enzyme catalyses a plastoquinone + NADPH + (n+1) H(+)(in) = a plastoquinol + NADP(+) + n H(+)(out). Functionally, NDH shuttles electrons from NAD(P)H:plastoquinone, via FMN and iron-sulfur (Fe-S) centers, to quinones in the photosynthetic chain and possibly in a chloroplast respiratory chain. The immediate electron acceptor for the enzyme in this species is believed to be plastoquinone. Couples the redox reaction to proton translocation, and thus conserves the redox energy in a proton gradient. This chain is NAD(P)H-quinone oxidoreductase subunit K, chloroplastic, found in Drimys granadensis.